We begin with the raw amino-acid sequence, 206 residues long: dTTP/UTP pyrophosphatase (206 aa).

The Proton acceptor role is filled by Asp87.

It belongs to the Maf family. YhdE subfamily. Requires a divalent metal cation as cofactor.

Its subcellular location is the cytoplasm. The enzyme catalyses dTTP + H2O = dTMP + diphosphate + H(+). It carries out the reaction UTP + H2O = UMP + diphosphate + H(+). Its function is as follows. Nucleoside triphosphate pyrophosphatase that hydrolyzes dTTP and UTP. May have a dual role in cell division arrest and in preventing the incorporation of modified nucleotides into cellular nucleic acids. The chain is dTTP/UTP pyrophosphatase from Aromatoleum aromaticum (strain DSM 19018 / LMG 30748 / EbN1) (Azoarcus sp. (strain EbN1)).